The primary structure comprises 202 residues: Na(+)-translocating NADH-quinone reductase subunit E (202 aa).

6 helical membrane-spanning segments follow: residues 11 to 31 (SIFI…YLAV), 39 to 59 (MGLG…NNLL), 79 to 99 (LTFV…QILE), 114 to 134 (GIFL…LFMV), 144 to 164 (VTFG…LAGI), and 180 to 200 (LGIT…FSGI).

Belongs to the NqrDE/RnfAE family. Composed of six subunits; NqrA, NqrB, NqrC, NqrD, NqrE and NqrF.

It is found in the cell inner membrane. The enzyme catalyses a ubiquinone + n Na(+)(in) + NADH + H(+) = a ubiquinol + n Na(+)(out) + NAD(+). Functionally, NQR complex catalyzes the reduction of ubiquinone-1 to ubiquinol by two successive reactions, coupled with the transport of Na(+) ions from the cytoplasm to the periplasm. NqrA to NqrE are probably involved in the second step, the conversion of ubisemiquinone to ubiquinol. The sequence is that of Na(+)-translocating NADH-quinone reductase subunit E from Maridesulfovibrio salexigens (strain ATCC 14822 / DSM 2638 / NCIMB 8403 / VKM B-1763) (Desulfovibrio salexigens).